Here is a 107-residue protein sequence, read N- to C-terminus: Integration host factor subunit alpha (107 aa).

The protein belongs to the bacterial histone-like protein family. Heterodimer of an alpha and a beta chain.

Functionally, this protein is one of the two subunits of integration host factor, a specific DNA-binding protein that functions in genetic recombination as well as in transcriptional and translational control. In Bartonella tribocorum (strain CIP 105476 / IBS 506), this protein is Integration host factor subunit alpha.